Here is a 279-residue protein sequence, read N- to C-terminus: S-formylglutathione hydrolase (279 aa).

Catalysis depends on charge relay system residues Ser150, Asp226, and His258.

The protein belongs to the esterase D family.

The catalysed reaction is S-formylglutathione + H2O = formate + glutathione + H(+). Functionally, serine hydrolase involved in the detoxification of formaldehyde. Hydrolyzes S-formylglutathione to glutathione and formate. The chain is S-formylglutathione hydrolase (fghA) from Paracoccus denitrificans (strain Pd 1222).